A 130-amino-acid chain; its full sequence is Small ribosomal subunit protein uS11c (130 aa).

This sequence belongs to the universal ribosomal protein uS11 family. Part of the 30S ribosomal subunit.

It is found in the plastid. It localises to the chloroplast. In Bigelowiella natans (Pedinomonas minutissima), this protein is Small ribosomal subunit protein uS11c.